The chain runs to 197 residues: Small ribosomal subunit protein uS4 (197 aa).

One can recognise an S4 RNA-binding domain in the interval 88 to 150; sequence SRLDNLVYRM…AKSLEIILDN (63 aa).

The protein belongs to the universal ribosomal protein uS4 family. Part of the 30S ribosomal subunit. Contacts protein S5. The interaction surface between S4 and S5 is involved in control of translational fidelity.

In terms of biological role, one of the primary rRNA binding proteins, it binds directly to 16S rRNA where it nucleates assembly of the body of the 30S subunit. Functionally, with S5 and S12 plays an important role in translational accuracy. The sequence is that of Small ribosomal subunit protein uS4 from Azobacteroides pseudotrichonymphae genomovar. CFP2.